Here is a 210-residue protein sequence, read N- to C-terminus: Thymidylate kinase (210 aa).

A dGMP-binding site is contributed by aspartate 17. Aspartate 17 lines the dTMP pocket. The ATP site is built by arginine 18, serine 19, glycine 20, lysine 21, serine 22, and threonine 23. DTMP is bound by residues arginine 47, phenylalanine 74, arginine 78, arginine 99, and tyrosine 107. Residues phenylalanine 74, arginine 78, arginine 99, tyrosine 107, serine 108, and tyrosine 153 each contribute to the dGMP site. The LID stretch occupies residues 143–155 (QNRSDYGEEIYEK). Arginine 182 is a binding site for ATP.

This sequence belongs to the thymidylate kinase family. In terms of assembly, homodimer. Binds two dTMP molecules per dimer. Binds only one dTGP molecule per dimer.

The catalysed reaction is dTMP + ATP = dTDP + ADP. It carries out the reaction dGMP + ATP = dGDP + ADP. It participates in pyrimidine metabolism; dTTP biosynthesis. Inhibited by deoxyguanosine (dG), deoxythymidine (dT) and azidothymidine (AZT). In terms of biological role, catalyzes the phosphorylation of thymidine monophosphate (dTMP) to thymidine diphosphate (dTDP), the immediate precursor for the DNA building block dTTP. Can also phosphorylate dGMP and to a lesser extent GMP, dUMP and dIMP. Can use either ATP or dATP as phosphate donors in presence of Mg(2+). This Plasmodium falciparum (isolate 3D7) protein is Thymidylate kinase.